The following is a 3546-amino-acid chain: MCENCADLVEVLNEISDVEGGDGLQLRKEHTLKIFTYINSWTQRQCLCCFKEYKHLEIFNQVVCALINLVIAQVQVLRDQLCKHCTTINIDSTWQDESNQAEEPLNIDRECNEGSTERQKSIEKKSNSTRICNLTEEESSKSSDPFSLWSTDEKEKLLLCVAKIFQIQFPLYTAYKHNTHPTIEDISTQESNILGAFCDMNDVEVPLHLLRYVCLFCGKNGLSLMKDCFEYGTPETLPFLIAHAFITVVSNIRIWLHIPAVMQHIIPFRTYVIRYLCKLSDQELRQSAARNMADLMWSTVKEPLDTTLCFDKESLDLAFKYFMSPTLTMRLAGLSQITNQLHTFNDVCNNESLVSDTETSIAKELADWLISNNVVEHIFGPNLHIEIIKQCQVILNFLAAEGRLSTQHIDCIWAAAQLKHCSRYIHDLFPSLIKNLDPVPLRHLLNLVSALEPSVHTEQTLYLASMLIKALWNNALAAKAQLSKQSSFASLLNTNIPIGNKKEEEELRRTAPSPWSPAASPQSSDNSDTHQSGGSDIEMDEQLINRTKHVQQRLSDTEESMQGSSDETANSGEDGSSGPGSSSGHSDGSSNEVNSSHASQSAGSPGSEVQSEDIADIEALKEEDEDDDHGHNPPKSSCGTDLRNRKLESQAGICLGDSQGMSERNGTSSGTGKDLVFNTESLPSVDNRMRMLDACSHSEDPEHDISGEMNATHIAQGSQESCITRTGDFLGETIGNELFNCRQFIGPQHHHHHHHHHHHHDGHMVDDMLSADDVSCSSSQVSAKSEKNMADFDGEESGCEEELVQINSHAELTSHLQQHLPNLASIYHEHLSQGPVVHKHQFNSNAVTDINLDNVCKKGNTLLWDIVQDEDAVNLSEGLINEAEKLLCSLVCWFTDRQIRMRFIEGCLENLGNNRSVVISLRLLPKLFGTFQQFGSSYDTHWITMWAEKELNMMKLFFDNLVYYIQTVREGRQKHALYSHSAEVQVRLQFLTCVFSTLGSPDHFRLSLEQVDILWHCLVEDSECYDDALHWFLNQVRSKDQHAMGMETYKHLFLEKMPQLKPETISMTGLNLFQHLCNLARLATSAYDGCSNSELCGMDQFWGIALRAQSGDVSRAAIQYINSYYINGKTGLEKEQEFISKCMESLMIASSSLEQESHSSLMVIERGLLMLKTHLEAFRRRFAYHLRQWQIEGTGISSHLKALSDKQSLPLRVVCQPAGLPDKMTIEMYPSDQVADLRAEVTHWYENLQKEQINQQAQLQEFGQSNRKGEFPGGLMGPVRMISSGHELTTDYDEKALHELGFKDMQMVFVSLGAPRRERKGEGVQLPASCLPPPQKDNIPMLLLLQEPHLTTLFDLLEMLASFKPPSGKVAVDDSESLRCEELHLHAENLSRRVWELLMLLPTCPNMLMAFQNISDEQSNDGFNWKELLKIKSAHKLLYALEIIEALGKPNRRIRRESTGSYSDLYPDSDDSSEDQVENSKNSWSCKFVAAGGLQQLLEIFNSGILEPKEQESWTVWQLDCLACLLKLICQFAVDPSDLDLAYHDVFAWSGIAESHRKRTWPGKSRKAAGDHAKGLHIPRLTEVFLVLVQGTSLIQRLMSVAYTYDNLAPRVLKAQSDHRSRHEVSHYSMWLLVSWAHCCSLVKSSLADSDHLQDWLKKLTLLIPETAVRHESCSGLYKLSLSGLDGGDSINRSFLLLAASTLLKFLPDAQALKPIRIDDYEEEPILKPGCKEYFWLLCKLVDNIHIKDASQTTLLDLDALARHLADCIRSREILDHQDGNVEDDGLTGLLRLATSVVKHKPPFKFSREGQEFLRDIFNLLFLLPSLKDRQQPKCKSHSSRAAAYDLLVEMVKGSVENYRLIHNWVMAQHMQSHAPYKWDYWPHEDVRAECRFVGLTNLGATCYLASTIQQLYMIPEARQAVFTAKYSEDMKHKTTLLELQKMFTYLMESECKAYNPRPFCKTYTMDKQPLNTGEQKDMTEFFTDLITKIEEMSPELKNTVKSLFGGVITNNVVSLDCEHVSQTAEEFYTVRCQVADMKNIYESLDEVTIKDTLEGDNMYTCSHCGKKVRAEKRACFKKLPRILSFNTMRYTFNMVTMMKEKVNTHFSFPLRLDMTPYTEDFLMGKSERKEGFKEVSDHSKDSESYEYDLIGVTVHTGTADGGHYYSFIRDIVNPHAYKNNKWYLFNDAEVKPFDSAQLASECFGGEMTTKTYDSVTDKFMDFSFEKTHSAYMLFYKRMEPEEENGREYKFDVSSELLEWIWHDNMQFLQDKNIFEHTYFGFMWQLCSCIPSTLPDPKAVSLMTAKLSTSFVLETFIHSKEKPTMLQWIELLTKQFNNSQAACEWFLDRMADDDWWPMQILIKCPNQIVRQMFQRLCIHVIQRLRPVHAHLYLQPGMEDGSDDMDTSVEDIGGRSCVTRFVRTLLLIMEHGVKPHSKHLTEYFAFLYEFAKMGEEESQFLLSLQAISTMVHFYMGTKGPENPQVEVLSEEEGEEEEEEEDILSLAEEKYRPAALEKMIALVALLVEQSRSERHLTLSQTDMAALTGGKGFPFLFQHIRDGINIRQTCNLIFSLCRYNNRLAEHIVSMLFTSIAKLTPEAANPFFKLLTMLMEFAGGPPGMPPFASYILQRIWEVIEYNPSQCLDWLAVQTPRNKLAHSWVLQNMENWVERFLLAHNYPRVRTSAAYLLVSLIPSNSFRQMFRSTRSLHIPTRDLPLSPDTTVVLHQVYNVLLGLLSRAKLYVDAAVHGTTKLVPYFSFMTYCLISKTEKLMFSTYFMDLWNLFQPKLSEPAIATNHNKQALLSFWYNVCADCPENIRLIVQNPVVTKNIAFNYILADHDDQDVVLFNRGMLPAYYGILRLCCEQSPAFTRQLASHQNIQWAFKNLTPHASQYPGAVEELFNLMQLFIAQRPDMREEELEDIKQFKKTTISCYLRCLDGRSCWTTLISAFRILLESDEDRLLVVFNRGLILMTESFNTLHMMYHEATACHVTGDLVELLSIFLSVLKSTRPYLQRKDVKQALIQWQERIEFAHKLLTLLNSYSPPELRNACIDVLKELVLLSPHDFLHTLVPFLQHNHCTYHHSNIPMSLGPYFPCRENIKLIGGKSNIRPPRPELNMCLLPTMVETSKGKDDVYDRMLLDYFFSYHQFIHLLCRVAINCEKFTETLVKLSVLVAYEGLPLHLALFPKLWTELCQTQSAMSKNCIKLLCEDPVFAEYIKCILMDERTFLNNNIVYTFMTHFLLKVQSQVFSEANCANLISTLITNLISQYQNLQSDFSNRVEISKASASLNGDLRALALLLSVHTPKQLNPALIPTLQELLSKCRTCLQQRNSLQEQEAKERKTKDDEGATPIKRRRVSSDEEHTVDSCISDMKTETREVLTPTSTSDNETRDSSIIDPGTEQDLPSPENSSVKEYRMEVPSSFSEDMSNIRSQHAEEQSNNGRYDDCKEFKDLHCSKDSTLAEEESEFPSTSISAVLSDLADLRSCDGQALPSQDPEVALSLSCGHSRGLFSHMQQHDILDTLCRTIESTIHVVTRISGKGNQAAS.

Phosphoserine is present on residues Ser-352, Ser-486, Ser-487, and Ser-490. 3 disordered regions span residues 502–535, 550–679, and 1459–1478; these read KEEEELRRTAPSPWSPAASPQSSDNSDTHQSGGS, VQQR…VFNT, and TGSYSDLYPDSDDSSEDQVE. A compositionally biased stretch (low complexity) spans 511–524; sequence APSPWSPAASPQSS. Composition is skewed to polar residues over residues 525 to 534 and 560 to 570; these read DNSDTHQSGG and SMQGSSDETAN. The segment covering 571-590 has biased composition (low complexity); the sequence is SGEDGSSGPGSSSGHSDGSS. Over residues 591–609 the composition is skewed to polar residues; that stretch reads NEVNSSHASQSAGSPGSEV. The segment covering 610–627 has biased composition (acidic residues); the sequence is QSEDIADIEALKEEDEDD. At Ser-649 the chain carries Phosphoserine. Residues 659–671 are compositionally biased toward polar residues; the sequence is QGMSERNGTSSGT. The span at 1467-1477 shows a compositional bias: acidic residues; the sequence is PDSDDSSEDQV. Phosphoserine is present on Ser-1469. Residues 1894–2239 form the USP domain; sequence VGLTNLGATC…SAYMLFYKRM (346 aa). Catalysis depends on Cys-1903, which acts as the Nucleophile. His-2164 (proton acceptor) is an active-site residue. Ser-2488 is modified (phosphoserine). The segment at 3331-3443 is disordered; sequence NSLQEQEAKE…HAEEQSNNGR (113 aa). A compositionally biased stretch (basic and acidic residues) spans 3336-3347; it reads QEAKERKTKDDE. Phosphoserine is present on residues Ser-3358 and Ser-3359. Thr-3381 is modified (phosphothreonine). Residues Ser-3386 and Ser-3406 each carry the phosphoserine modification. The span at 3421 to 3432 shows a compositional bias: polar residues; sequence SSFSEDMSNIRS. A compositionally biased stretch (basic and acidic residues) spans 3433-3443; the sequence is QHAEEQSNNGR. Ser-3503 bears the Phosphoserine mark.

The protein belongs to the peptidase C19 family. In terms of assembly, interacts with AXIN1 and AXIN2. Expressed in brain at low level.

It carries out the reaction Thiol-dependent hydrolysis of ester, thioester, amide, peptide and isopeptide bonds formed by the C-terminal Gly of ubiquitin (a 76-residue protein attached to proteins as an intracellular targeting signal).. Its function is as follows. Ubiquitin hydrolase that can remove conjugated ubiquitin from AXIN1 and AXIN2, thereby acting as a regulator of Wnt signaling pathway. Acts as an activator of the Wnt signaling pathway downstream of the beta-catenin destruction complex by deubiquitinating and stabilizing AXIN1 and AXIN2, leading to promote nuclear accumulation of AXIN1 and AXIN2 and positively regulate beta-catenin (CTNBB1)-mediated transcription. Recognizes and hydrolyzes the peptide bond at the C-terminal Gly of ubiquitin. Involved in the processing of poly-ubiquitin precursors as well as that of ubiquitinated proteins. This Homo sapiens (Human) protein is Ubiquitin carboxyl-terminal hydrolase 34 (USP34).